Reading from the N-terminus, the 272-residue chain is Acidic leucine-rich nuclear phosphoprotein 32 family member B (272 aa).

4 LRR repeats span residues 16–40, 43–64, 65–84, and 89–110; these read PAAV…LTDE, NLEF…PKLP, KLKK…DRLA, and SLTH…EPLK. An LRRCT domain is found at 123-161; the sequence is CEVTNRSDYRETVFRLLPQLSYLDGYDREDQEAPDSDVE. Residues 149-254 are compositionally biased toward acidic residues; that stretch reads DREDQEAPDS…DEDEDEEEEE (106 aa). Residues 149–272 form a disordered region; that stretch reads DREDQEAPDS…RETDDEGEDD (124 aa). Phosphoserine is present on residues serine 164 and serine 171. Basic and acidic residues predominate over residues 255–265; that stretch reads SGKGEKRKRET. The Nuclear localization signal signature appears at 260-263; it reads KRKR. Threonine 265 carries the phosphothreonine modification.

Belongs to the ANP32 family. In terms of assembly, interacts with histones H3 and H4. Interacts with KLF5; this interaction induces promoter region-specific histone incorporation and inhibition of histone acetylation by ANP32B. Post-translationally, some glutamate residues are glycylated by TTLL8. This modification occurs exclusively on glutamate residues and results in a glycine chain on the gamma-carboxyl group. Directly cleaved by caspase-3/CASP3. In terms of tissue distribution, predominantly expressed in brain. Expressed in the entire embryonic brain, whereas in the adult brain its expression is restricted to the subventricular zone where there are neural progenitor cells.

It is found in the nucleus. Its function is as follows. Multifunctional protein that is involved in the regulation of many processes including cell proliferation, apoptosis, cell cycle progression or transcription. Regulates the proliferation of neuronal stem cells, differentiation of leukemic cells and progression from G1 to S phase of the cell cycle. As negative regulator of caspase-3-dependent apoptosis, may act as an antagonist of ANP32A in regulating tissue homeostasis. Exhibits histone chaperone properties, able to recruit histones to certain promoters, thus regulating the transcription of specific genes. Also plays an essential role in the nucleocytoplasmic transport of specific mRNAs via the uncommon nuclear mRNA export receptor XPO1/CRM1. Participates in the regulation of adequate adaptive immune responses by acting on mRNA expression and cell proliferation. This is Acidic leucine-rich nuclear phosphoprotein 32 family member B (Anp32b) from Rattus norvegicus (Rat).